We begin with the raw amino-acid sequence, 406 residues long: LIM/homeobox protein Lhx1 (406 aa).

LIM zinc-binding domains follow at residues Cys-4–Asp-54 and Cys-63–Asp-117. Disordered stretches follow at residues Asn-128–Ala-189 and Asp-294–Val-372. Over residues Ser-137–Pro-148 the composition is skewed to low complexity. Over residues Asp-151–Gly-167 the composition is skewed to basic and acidic residues. At Ser-162 the chain carries Phosphoserine. Residues Arg-180–Lys-239 constitute a DNA-binding region (homeobox). Residues Pro-315 to Leu-327 are compositionally biased toward low complexity. Pro residues predominate over residues Gly-352 to Pro-362.

As to quaternary structure, interacts with LDB1 via the tandem LIM domains.

The protein localises to the nucleus. Functionally, potential transcription factor. May play a role in early mesoderm formation and later in lateral mesoderm differentiation and neurogenesis. The sequence is that of LIM/homeobox protein Lhx1 (Lhx1) from Mesocricetus auratus (Golden hamster).